A 191-amino-acid chain; its full sequence is Protein GrpE (191 aa).

The segment covering 1 to 10 has biased composition (basic and acidic residues); that stretch reads MNHEEQKVEA. Residues 1-28 are disordered; it reads MNHEEQKVEAMEQVEAQPVEPTDVDSEV.

The protein belongs to the GrpE family. In terms of assembly, homodimer.

The protein localises to the cytoplasm. Its function is as follows. Participates actively in the response to hyperosmotic and heat shock by preventing the aggregation of stress-denatured proteins, in association with DnaK and GrpE. It is the nucleotide exchange factor for DnaK and may function as a thermosensor. Unfolded proteins bind initially to DnaJ; upon interaction with the DnaJ-bound protein, DnaK hydrolyzes its bound ATP, resulting in the formation of a stable complex. GrpE releases ADP from DnaK; ATP binding to DnaK triggers the release of the substrate protein, thus completing the reaction cycle. Several rounds of ATP-dependent interactions between DnaJ, DnaK and GrpE are required for fully efficient folding. This Aeromonas hydrophila subsp. hydrophila (strain ATCC 7966 / DSM 30187 / BCRC 13018 / CCUG 14551 / JCM 1027 / KCTC 2358 / NCIMB 9240 / NCTC 8049) protein is Protein GrpE.